A 392-amino-acid chain; its full sequence is tRNA-specific 2-thiouridylase MnmA (392 aa).

ATP-binding positions include 18–25 and leucine 44; that span reads AMSGGVDS. Cysteine 112 (nucleophile) is an active-site residue. A disulfide bridge links cysteine 112 with cysteine 208. Glycine 136 contributes to the ATP binding site. Positions 158 to 160 are interaction with tRNA; that stretch reads RDQ. Residue cysteine 208 is the Cysteine persulfide intermediate of the active site.

The protein belongs to the MnmA/TRMU family.

It is found in the cytoplasm. The catalysed reaction is S-sulfanyl-L-cysteinyl-[protein] + uridine(34) in tRNA + AH2 + ATP = 2-thiouridine(34) in tRNA + L-cysteinyl-[protein] + A + AMP + diphosphate + H(+). Catalyzes the 2-thiolation of uridine at the wobble position (U34) of tRNA, leading to the formation of s(2)U34. This is tRNA-specific 2-thiouridylase MnmA from Rhodospirillum centenum (strain ATCC 51521 / SW).